The primary structure comprises 226 residues: 2-C-methyl-D-erythritol 4-phosphate cytidylyltransferase (226 aa).

It belongs to the IspD/TarI cytidylyltransferase family. IspD subfamily.

The enzyme catalyses 2-C-methyl-D-erythritol 4-phosphate + CTP + H(+) = 4-CDP-2-C-methyl-D-erythritol + diphosphate. It functions in the pathway isoprenoid biosynthesis; isopentenyl diphosphate biosynthesis via DXP pathway; isopentenyl diphosphate from 1-deoxy-D-xylulose 5-phosphate: step 2/6. Functionally, catalyzes the formation of 4-diphosphocytidyl-2-C-methyl-D-erythritol from CTP and 2-C-methyl-D-erythritol 4-phosphate (MEP). The protein is 2-C-methyl-D-erythritol 4-phosphate cytidylyltransferase of Bacillus thuringiensis (strain Al Hakam).